Reading from the N-terminus, the 524-residue chain is Ribonuclease Y (524 aa).

The chain crosses the membrane as a helical span at residues 3–23 (IVINLFLLVPASIVFFAAGFF). Residues 96–127 (QQREGQLKKQAQDNRDMERRLQDQRKENEQVQ) are disordered. Residues 100–124 (GQLKKQAQDNRDMERRLQDQRKENE) show a composition bias toward basic and acidic residues. The KH domain maps to 214–280 (ALSVVHIQTD…KLTLQKLLSE (67 aa)). The HD domain occupies 340-432 (LLQHSREVAM…VDAANVISLS (93 aa)).

This sequence belongs to the RNase Y family.

It localises to the cell membrane. Endoribonuclease that initiates mRNA decay. This is Ribonuclease Y from Chlorobium phaeovibrioides (strain DSM 265 / 1930) (Prosthecochloris vibrioformis (strain DSM 265)).